Consider the following 322-residue polypeptide: Malate dehydrogenase (322 aa).

NAD(+) contacts are provided by residues 10 to 15 and Asp-34; that span reads GSGQIG. 2 residues coordinate substrate: Arg-83 and Arg-89. NAD(+)-binding positions include Asn-96 and 119-121; that span reads ITN. Asn-121 and Arg-152 together coordinate substrate. Catalysis depends on His-176, which acts as the Proton acceptor.

It belongs to the LDH/MDH superfamily. MDH type 3 family.

It catalyses the reaction (S)-malate + NAD(+) = oxaloacetate + NADH + H(+). Catalyzes the reversible oxidation of malate to oxaloacetate. The protein is Malate dehydrogenase of Rhodopseudomonas palustris (strain HaA2).